Consider the following 351-residue polypeptide: DNA polymerase IV (351 aa).

The UmuC domain maps to 4-185 (IIHVDMDCFF…LPLAKIPGVG (182 aa)). 2 residues coordinate Mg(2+): Asp8 and Asp103. The active site involves Glu104.

This sequence belongs to the DNA polymerase type-Y family. Monomer. Requires Mg(2+) as cofactor.

It localises to the cytoplasm. The catalysed reaction is DNA(n) + a 2'-deoxyribonucleoside 5'-triphosphate = DNA(n+1) + diphosphate. Its function is as follows. Poorly processive, error-prone DNA polymerase involved in untargeted mutagenesis. Copies undamaged DNA at stalled replication forks, which arise in vivo from mismatched or misaligned primer ends. These misaligned primers can be extended by PolIV. Exhibits no 3'-5' exonuclease (proofreading) activity. May be involved in translesional synthesis, in conjunction with the beta clamp from PolIII. The sequence is that of DNA polymerase IV from Escherichia coli O9:H4 (strain HS).